Here is a 939-residue protein sequence, read N- to C-terminus: Translation initiation factor IF-2 (939 aa).

Disordered stretches follow at residues 51-81 (LGTK…GGKK) and 137-353 (VTNK…EMKA). Basic and acidic residues predominate over residues 181–210 (NEKKAGAPEIKRAEHTETVEKSKTAVDSKK). The span at 259-277 (PVNRSPRPSTPSPNRSAGG) shows a compositional bias: low complexity. Residues 300-312 (RRDEKPAERDSRP) show a composition bias toward basic and acidic residues. The region spanning 437–606 (GRCPVVTVMG…QLAAEMLELK (170 aa)) is the tr-type G domain. The segment at 446–453 (GHVDHGKT) is G1. A GTP-binding site is contributed by 446–453 (GHVDHGKT). Residues 471–475 (GITQH) form a G2 region. Residues 492 to 495 (DTPG) form a G3 region. Residues 492–496 (DTPGH) and 546–549 (NKID) each bind GTP. Positions 546–549 (NKID) are G4. Residues 582 to 584 (SAK) are G5.

It belongs to the TRAFAC class translation factor GTPase superfamily. Classic translation factor GTPase family. IF-2 subfamily.

The protein resides in the cytoplasm. One of the essential components for the initiation of protein synthesis. Protects formylmethionyl-tRNA from spontaneous hydrolysis and promotes its binding to the 30S ribosomal subunits. Also involved in the hydrolysis of GTP during the formation of the 70S ribosomal complex. This Desulfotalea psychrophila (strain LSv54 / DSM 12343) protein is Translation initiation factor IF-2.